The primary structure comprises 91 residues: DNA-directed RNA polymerase subunit omega (91 aa).

Belongs to the RNA polymerase subunit omega family. The RNAP catalytic core consists of 2 alpha, 1 beta, 1 beta' and 1 omega subunit. When a sigma factor is associated with the core the holoenzyme is formed, which can initiate transcription. The rRNA transcription and antitermination complex (rrnTAC) consists of RNAP, NusA, NusB, NusE (rpsJ), NusG, SubB, ribosomal protein S4, DNA and precursor rRNA; S4 is more flexible than other subunits.

It catalyses the reaction RNA(n) + a ribonucleoside 5'-triphosphate = RNA(n+1) + diphosphate. In terms of biological role, promotes RNA polymerase (RNAP) assembly. Latches the N- and C-terminal regions of the beta' subunit thereby facilitating its interaction with the beta and alpha subunits. Part of the processive rRNA transcription and antitermination complex (rrnTAC). The complex forms an RNA-chaperone ring around the RNA exit tunnel of RNAP. It supports rapid transcription and antitermination of rRNA operons, cotranscriptional rRNA folding, and annealing of distal rRNA regions to allow correct ribosome biogenesis. The protein is DNA-directed RNA polymerase subunit omega (rpoZ) of Escherichia coli (strain K12).